We begin with the raw amino-acid sequence, 198 residues long: Sulfite reductase, dissimilatory-type subunit alpha (198 aa).

[4Fe-4S] cluster-binding residues include Cys45, Cys64, Cys67, and Cys70. A 4Fe-4S ferredoxin-type domain is found at Gly55–Glu83.

Heterohexamer of two alpha, two beta and two gamma subunits.

Part of the complex that catalyzes the reduction of sulfite to sulfide. The alpha and beta subunits may have arisen by gene duplication. They both bind 2 iron-sulfur clusters, but the alpha subunit seems to be catalytically inactive, due to substitutions along the putative substrate access channel, and because it binds sirohydrochlorin (the dematallated form of siroheme) instead of siroheme. The sequence is that of Sulfite reductase, dissimilatory-type subunit alpha (dsrA) from Megalodesulfovibrio gigas (strain ATCC 19364 / DSM 1382 / NCIMB 9332 / VKM B-1759) (Desulfovibrio gigas).